Here is a 204-residue protein sequence, read N- to C-terminus: Large ribosomal subunit protein uL4 (204 aa).

The segment at 47–69 is disordered; that stretch reads KAQKNRAAVSGGGKKPWRQKGTG.

It belongs to the universal ribosomal protein uL4 family. Part of the 50S ribosomal subunit.

Functionally, one of the primary rRNA binding proteins, this protein initially binds near the 5'-end of the 23S rRNA. It is important during the early stages of 50S assembly. It makes multiple contacts with different domains of the 23S rRNA in the assembled 50S subunit and ribosome. Its function is as follows. Forms part of the polypeptide exit tunnel. The chain is Large ribosomal subunit protein uL4 from Teredinibacter turnerae (strain ATCC 39867 / T7901).